The sequence spans 153 residues: 3-hydroxyacyl-[acyl-carrier-protein] dehydratase FabZ (153 aa).

His-57 is an active-site residue.

It belongs to the thioester dehydratase family. FabZ subfamily.

Its subcellular location is the cytoplasm. It catalyses the reaction a (3R)-hydroxyacyl-[ACP] = a (2E)-enoyl-[ACP] + H2O. Functionally, involved in unsaturated fatty acids biosynthesis. Catalyzes the dehydration of short chain beta-hydroxyacyl-ACPs and long chain saturated and unsaturated beta-hydroxyacyl-ACPs. The protein is 3-hydroxyacyl-[acyl-carrier-protein] dehydratase FabZ of Xanthomonas campestris pv. campestris (strain 8004).